Reading from the N-terminus, the 318-residue chain is GPN-loop GTPase 2 (318 aa).

A GTP-binding site is contributed by 29–34; sequence GSGKST. The short motif at 85 to 87 is the Gly-Pro-Asn (GPN)-loop; involved in dimer interface element; it reads GPN. 187 to 190 is a binding site for GTP; it reads SKMD.

This sequence belongs to the GPN-loop GTPase family. In terms of assembly, heterodimers with gpn1 or gpn3. Binds to RNA polymerase II (RNAPII).

Small GTPase required for proper localization of RNA polymerase II and III (RNAPII and RNAPIII). May act at an RNAP assembly step prior to nuclear import. In Xenopus laevis (African clawed frog), this protein is GPN-loop GTPase 2.